Reading from the N-terminus, the 182-residue chain is Adenine phosphoribosyltransferase (182 aa).

Belongs to the purine/pyrimidine phosphoribosyltransferase family. As to quaternary structure, homodimer.

Its subcellular location is the cytoplasm. It catalyses the reaction AMP + diphosphate = 5-phospho-alpha-D-ribose 1-diphosphate + adenine. Its pathway is purine metabolism; AMP biosynthesis via salvage pathway; AMP from adenine: step 1/1. Its function is as follows. Catalyzes a salvage reaction resulting in the formation of AMP, that is energically less costly than de novo synthesis. The chain is Adenine phosphoribosyltransferase from Pseudomonas paraeruginosa (strain DSM 24068 / PA7) (Pseudomonas aeruginosa (strain PA7)).